The sequence spans 662 residues: Portal protein (662 aa).

The segment covering 1 to 26 (MHRASANSPLNSVSGSMMWRNQSSGR) has biased composition (polar residues). Residues 1-35 (MHRASANSPLNSVSGSMMWRNQSSGRRPSKRLSDN) are disordered.

This sequence belongs to the herpesviridae portal protein family. In terms of assembly, homododecamerizes. Interacts with terminase subunits TRM1 and TRM3.

Its subcellular location is the virion. The protein resides in the host nucleus. In terms of biological role, forms a portal in the viral capsid through which viral DNA is translocated during DNA packaging. Assembles as a dodecamer at a single fivefold axe of the T=16 icosahedric capsid. Binds to the molecular motor that translocates the viral DNA, termed terminase. This is Portal protein (U76) from Human herpesvirus 6B (strain Z29) (HHV-6 variant B).